Here is a 469-residue protein sequence, read N- to C-terminus: Asparagine--tRNA ligase (469 aa).

Belongs to the class-II aminoacyl-tRNA synthetase family. As to quaternary structure, homodimer.

It localises to the cytoplasm. The enzyme catalyses tRNA(Asn) + L-asparagine + ATP = L-asparaginyl-tRNA(Asn) + AMP + diphosphate + H(+). The polypeptide is Asparagine--tRNA ligase (Porphyromonas gingivalis (strain ATCC 33277 / DSM 20709 / CIP 103683 / JCM 12257 / NCTC 11834 / 2561)).